The chain runs to 254 residues: NAD-dependent glycerol dehydrogenase (254 aa).

An NAD(+)-binding site is contributed by 18–47; sequence VVTGAASGIGKAMAELFSEKGAYVVLLDIK. Y160 functions as the Proton acceptor in the catalytic mechanism. Residue K164 participates in NAD(+) binding.

The protein belongs to the short-chain dehydrogenases/reductases (SDR) family. It depends on Mg(2+) as a cofactor. The cofactor is Mn(2+).

It is found in the cytoplasm. It catalyses the reaction glycerol + NAD(+) = dihydroxyacetone + NADH + H(+). Its activity is regulated as follows. Inhibited by Zn(2+). Involved in the glycerol metabolism. Catalyzes the NAD-dependent oxidation of glycerol to dihydroxyacetone (glycerone). GolD specifically uses NAD. The protein is NAD-dependent glycerol dehydrogenase of Listeria innocua serovar 6a (strain ATCC BAA-680 / CLIP 11262).